The following is a 369-amino-acid chain: Biotin synthase (369 aa).

Residues 51–269 (NYVQVSTLLS…IAVARIMMPK (219 aa)) enclose the Radical SAM core domain. The [4Fe-4S] cluster site is built by Cys66, Cys70, and Cys73. Residues Cys110, Cys141, Cys201, and Arg273 each contribute to the [2Fe-2S] cluster site.

Belongs to the radical SAM superfamily. Biotin synthase family. In terms of assembly, homodimer. It depends on [4Fe-4S] cluster as a cofactor. Requires [2Fe-2S] cluster as cofactor.

The enzyme catalyses (4R,5S)-dethiobiotin + (sulfur carrier)-SH + 2 reduced [2Fe-2S]-[ferredoxin] + 2 S-adenosyl-L-methionine = (sulfur carrier)-H + biotin + 2 5'-deoxyadenosine + 2 L-methionine + 2 oxidized [2Fe-2S]-[ferredoxin]. The protein operates within cofactor biosynthesis; biotin biosynthesis; biotin from 7,8-diaminononanoate: step 2/2. Catalyzes the conversion of dethiobiotin (DTB) to biotin by the insertion of a sulfur atom into dethiobiotin via a radical-based mechanism. This chain is Biotin synthase, found in Pseudoalteromonas atlantica (strain T6c / ATCC BAA-1087).